The sequence spans 287 residues: Hypersensitive-induced response protein-like protein 2 (287 aa).

A lipid anchor (N-myristoyl glycine) is attached at Gly2.

Functionally, positive regulator of hypersensitive response (HR)-like cell death. May be involved in potassium ion channel regulation. This Oryza sativa subsp. japonica (Rice) protein is Hypersensitive-induced response protein-like protein 2 (HIRL2).